Reading from the N-terminus, the 311-residue chain is Ribosomal RNA small subunit methyltransferase H (311 aa).

S-adenosyl-L-methionine contacts are provided by residues 41–43 (GGH), D61, F85, D102, and Q109.

It belongs to the methyltransferase superfamily. RsmH family.

The protein resides in the cytoplasm. It catalyses the reaction cytidine(1402) in 16S rRNA + S-adenosyl-L-methionine = N(4)-methylcytidine(1402) in 16S rRNA + S-adenosyl-L-homocysteine + H(+). In terms of biological role, specifically methylates the N4 position of cytidine in position 1402 (C1402) of 16S rRNA. This is Ribosomal RNA small subunit methyltransferase H from Paracidovorax citrulli (strain AAC00-1) (Acidovorax citrulli).